The primary structure comprises 247 residues: tRNA pseudouridine synthase A (247 aa).

Residue Asp-53 is the Nucleophile of the active site. Tyr-111 contacts substrate.

This sequence belongs to the tRNA pseudouridine synthase TruA family. Homodimer.

It carries out the reaction uridine(38/39/40) in tRNA = pseudouridine(38/39/40) in tRNA. In terms of biological role, formation of pseudouridine at positions 38, 39 and 40 in the anticodon stem and loop of transfer RNAs. In Bacillus velezensis (strain DSM 23117 / BGSC 10A6 / LMG 26770 / FZB42) (Bacillus amyloliquefaciens subsp. plantarum), this protein is tRNA pseudouridine synthase A.